Consider the following 434-residue polypeptide: MKTIIKNAKVITMNEARTIHEHGYVVIEDGVFTAIEHGEPAEEAAKGANVVNADKKWLMPGLINTHGHTGMSLFRGVSDDLPLSKWLAEHIWPLEQKLDQKAVEAARLLSMVEMIESGTTTFLEMYHLHLDDFAAAVEEAGMRATLMRSVIGLCSKEEQEEKLAESLGFARRWHKQANGRIQTMLAPHAPYTCPPDYIERIVEAARQEGLPVHMHLAETRKEIHDYMDEYGMHPVELLQERDLLSGTEWLFAHGVHMHEQHYELLGAHQAAVSHNPKSNLKLGSGIAQVASMQKHGIVVSLGTDSVASNNALDLFEEMRTAVLLQRGINEQADIVTTWEGLNMATSNGAKALRFANLGTIEVGQQADFIMLNPEQAHLHPSSQAVSHLVFAAKGSDVTDVYVQGAPLMKDKQLLTLDKERILKEANEQLRRLQQ.

Histidine 66 and histidine 68 together coordinate Zn(2+). Substrate-binding residues include glutamate 95, arginine 148, and histidine 188. Zn(2+) is bound at residue histidine 215. Substrate contacts are provided by glutamate 218 and aspartate 304. Aspartate 304 serves as a coordination point for Zn(2+).

Belongs to the metallo-dependent hydrolases superfamily. MTA/SAH deaminase family. Requires Zn(2+) as cofactor.

It catalyses the reaction S-adenosyl-L-homocysteine + H2O + H(+) = S-inosyl-L-homocysteine + NH4(+). It carries out the reaction S-methyl-5'-thioadenosine + H2O + H(+) = S-methyl-5'-thioinosine + NH4(+). Functionally, catalyzes the deamination of 5-methylthioadenosine and S-adenosyl-L-homocysteine into 5-methylthioinosine and S-inosyl-L-homocysteine, respectively. Is also able to deaminate adenosine. This Shouchella clausii (strain KSM-K16) (Alkalihalobacillus clausii) protein is 5-methylthioadenosine/S-adenosylhomocysteine deaminase.